Reading from the N-terminus, the 363-residue chain is Chorismate synthase (363 aa).

The disordered stretch occupies residues 42 to 61 (QRDLDRRKPGTSRHTTQRQE). Positions 48 and 54 each coordinate NADP(+). FMN is bound by residues 125–127 (RSS), 237–238 (NA), glycine 277, 292–296 (KPTSS), and arginine 318.

The protein belongs to the chorismate synthase family. In terms of assembly, homotetramer. It depends on FMNH2 as a cofactor.

It carries out the reaction 5-O-(1-carboxyvinyl)-3-phosphoshikimate = chorismate + phosphate. It functions in the pathway metabolic intermediate biosynthesis; chorismate biosynthesis; chorismate from D-erythrose 4-phosphate and phosphoenolpyruvate: step 7/7. Its function is as follows. Catalyzes the anti-1,4-elimination of the C-3 phosphate and the C-6 proR hydrogen from 5-enolpyruvylshikimate-3-phosphate (EPSP) to yield chorismate, which is the branch point compound that serves as the starting substrate for the three terminal pathways of aromatic amino acid biosynthesis. This reaction introduces a second double bond into the aromatic ring system. The protein is Chorismate synthase of Pseudomonas aeruginosa (strain LESB58).